A 144-amino-acid chain; its full sequence is Ribonuclease H (144 aa).

Residues 1 to 141 (MKKVEIFTDG…ADRLASEAAD (141 aa)) form the RNase H type-1 domain. Residues Asp-9, Glu-47, Asp-69, and Asp-133 each coordinate Mg(2+).

The protein belongs to the RNase H family. Monomer. Mg(2+) is required as a cofactor.

Its subcellular location is the cytoplasm. The catalysed reaction is Endonucleolytic cleavage to 5'-phosphomonoester.. Its function is as follows. Endonuclease that specifically degrades the RNA of RNA-DNA hybrids. The protein is Ribonuclease H of Erythrobacter litoralis (strain HTCC2594).